Consider the following 200-residue polypeptide: Urease accessory protein UreE (200 aa).

Residues 171-200 are disordered; it reads HHGHAHPHPHDHDHQHGPGCAHGRHGHDHH.

The protein belongs to the UreE family.

Its subcellular location is the cytoplasm. In terms of biological role, involved in urease metallocenter assembly. Binds nickel. Probably functions as a nickel donor during metallocenter assembly. The protein is Urease accessory protein UreE of Burkholderia vietnamiensis (strain G4 / LMG 22486) (Burkholderia cepacia (strain R1808)).